Here is a 239-residue protein sequence, read N- to C-terminus: MADLQTQMKQAVADAAVEQIKDGMVLGLGSGSTAALMIQGLGAKLASGELKDIVGVTTSFQGEVLAAELNIPLLSLNAVSRIDLAIDGADEVDPGFQLIKGGGACHVQEKLVAARADRFVVVVDSTKLVDRLNLGFLLPVEVLPGAWRQVKQQLEALGGSAELRMAQRKAGPVVTDQGNLVLDAKLDGGISDPVALEQTINNIPGVLENGLFVNITDEVLVGEITDGVAGVRSLQKRLS.

Residues 30–33, 87–90, and 100–103 each bind substrate; these read SGST, DGAD, and KGGG. The Proton acceptor role is filled by Glu109. Residue Lys127 coordinates substrate.

It belongs to the ribose 5-phosphate isomerase family. Homodimer.

The catalysed reaction is aldehydo-D-ribose 5-phosphate = D-ribulose 5-phosphate. It participates in carbohydrate degradation; pentose phosphate pathway; D-ribose 5-phosphate from D-ribulose 5-phosphate (non-oxidative stage): step 1/1. Catalyzes the reversible conversion of ribose-5-phosphate to ribulose 5-phosphate. The chain is Ribose-5-phosphate isomerase A from Synechococcus sp. (strain CC9605).